We begin with the raw amino-acid sequence, 224 residues long: Cytidylate kinase (224 aa).

An ATP-binding site is contributed by 12–20 (GPAGAGKST).

It belongs to the cytidylate kinase family. Type 1 subfamily.

It is found in the cytoplasm. The enzyme catalyses CMP + ATP = CDP + ADP. It catalyses the reaction dCMP + ATP = dCDP + ADP. The chain is Cytidylate kinase from Caldanaerobacter subterraneus subsp. tengcongensis (strain DSM 15242 / JCM 11007 / NBRC 100824 / MB4) (Thermoanaerobacter tengcongensis).